A 641-amino-acid polypeptide reads, in one-letter code: Threonine--tRNA ligase (641 aa).

Residues 1–61 (MPAITLPDGS…ADDASVRFIT (61 aa)) form the TGS domain. Residues 243-536 (DHRRIGREMD…LIEQHAGRFP (294 aa)) are catalytic. The Zn(2+) site is built by cysteine 336, histidine 387, and histidine 513.

The protein belongs to the class-II aminoacyl-tRNA synthetase family. As to quaternary structure, homodimer. Requires Zn(2+) as cofactor.

It localises to the cytoplasm. It catalyses the reaction tRNA(Thr) + L-threonine + ATP = L-threonyl-tRNA(Thr) + AMP + diphosphate + H(+). Catalyzes the attachment of threonine to tRNA(Thr) in a two-step reaction: L-threonine is first activated by ATP to form Thr-AMP and then transferred to the acceptor end of tRNA(Thr). Also edits incorrectly charged L-seryl-tRNA(Thr). The polypeptide is Threonine--tRNA ligase (Gluconacetobacter diazotrophicus (strain ATCC 49037 / DSM 5601 / CCUG 37298 / CIP 103539 / LMG 7603 / PAl5)).